The chain runs to 794 residues: MRVTSSRLLQGGSLVSRVLKRRLNNASRTKKGWFSTRTLADSNEHLRRVFDDQAYFDNFTKSGAPEGAMNSLFGGNGVGLFRNRALISPQGLVDFSEESLERAKMLVSNMMAEVKTSEQGRLEYIKKLDQLSDVLCRVIDVAEFIRVSHPSQKWVDAAQRTHEIMFEYMNQLNTNVELYESLRDLLIDPAITTKLSKEEIEVGEYLRQDFERSGIHMDPNTRNNFVAITQEISLLGSHFNNDIHSLESYWCNISRSEFDKISDTVVKSEIYGYQSSSPASQNKDSGNIYIPLAGHIPYTILSKCEVESVRRKVWISLHNSPKEQIDTLNAFVKYRALLAKMLGYKSFAHYQLEHKMAKNPENVLTLLRNLQQGLISKEYGVCEEVKKLHSFKNGDDAVMTDEEILEDVKPWDREYLLAQLQSQTLKDEEPLEDISEYFSVGTIVSGLSKLFYSIYNVNLIPEATLKGETWDSNQVRKLNVFDVTSNKKLGYLYLDFWSPKVLPSHFTIVCSRKLNTDIGSESRDEMREMVQLDENEQHQLPVISLVCNLSKPQGTGVGRFTGMDSRKPTLLSLDQVDTIFHEMGHAMHSMIGKTDLHNLSGTRCVTDFVELPSVLMESFSKDPRVLCKIAKHYRTKEPLSKETLAKHQSHRVLLEESETFMQSKMAMLDQVLHNEDIINCGIKDFDSTAVYHHLESQLKVFADKWSTWHGKFPHLFSYGAVYYSYLLDRAIAEKIWHGLFKDDPWSREAGQKYKDSILKWGGTRDPWVCLADALGDERLGKGDSKAMEIIGQKV.

The N-terminal 39 residues, 1 to 39 (MRVTSSRLLQGGSLVSRVLKRRLNNASRTKKGWFSTRTL), are a transit peptide targeting the mitochondrion. Residue H581 coordinates Zn(2+). The active site involves E582. Residues H585 and H588 each contribute to the Zn(2+) site.

This sequence belongs to the peptidase M3 family. It depends on Zn(2+) as a cofactor.

It is found in the mitochondrion matrix. The enzyme catalyses Release of an N-terminal octapeptide as second stage of processing of some proteins imported into the mitochondrion.. Functionally, cleaves proteins, imported into the mitochondrion, to their mature size. While most mitochondrial precursor proteins are processed to the mature form in one step by mitochondrial processing peptidase (MPP), the sequential cleavage by MIP of an octapeptide after initial processing by MPP is a required step for a subgroup of nuclear-encoded precursor proteins destined for the matrix or the inner membrane. The sequence is that of Mitochondrial intermediate peptidase (OCT1) from Debaryomyces hansenii (strain ATCC 36239 / CBS 767 / BCRC 21394 / JCM 1990 / NBRC 0083 / IGC 2968) (Yeast).